A 576-amino-acid chain; its full sequence is Arginine--tRNA ligase (576 aa).

Residues 126–136 (ANPTGPMHIGH) carry the 'HIGH' region motif.

This sequence belongs to the class-I aminoacyl-tRNA synthetase family. As to quaternary structure, monomer.

Its subcellular location is the cytoplasm. The enzyme catalyses tRNA(Arg) + L-arginine + ATP = L-arginyl-tRNA(Arg) + AMP + diphosphate. In Rickettsia typhi (strain ATCC VR-144 / Wilmington), this protein is Arginine--tRNA ligase.